The following is a 193-amino-acid chain: uncharacterized protein (193 aa).

A signal peptide spans 1-14 (MSTSLLFSLSPSSS).

This is an uncharacterized protein from Saccharomyces cerevisiae (strain ATCC 204508 / S288c) (Baker's yeast).